Consider the following 254-residue polypeptide: Major prion protein (254 aa).

The N-terminal stretch at 1-22 (MANLSYWLLALFVATWTDVGLC) is a signal peptide. The interaction with GRB2, ERI3 and SYN1 stretch occupies residues 23–231 (KKRPKPGGWN…SQAYYDGRRS (209 aa)). The disordered stretch occupies residues 25–108 (RPKPGGWNTG…WNKPNKPKTS (84 aa)). Repeat copies occupy residues 51-59 (PQGGGTWGQ), 60-67 (PHGGGWGQ), 68-75 (PHGGGWGQ), 76-83 (PHGGGWGQ), and 84-91 (PHGGGWGQ). Residues 51-91 (PQGGGTWGQPHGGGWGQPHGGGWGQPHGGGWGQPHGGGWGQ) are 5 X 8 AA tandem repeats of P-H-G-G-G-W-G-Q. Residues 52 to 95 (QGGGTWGQPHGGGWGQPHGGGWGQPHGGGWGQPHGGGWGQGGGT) show a composition bias toward gly residues. Cu(2+)-binding residues include His-61, Gly-62, Gly-63, His-69, Gly-70, Gly-71, His-77, Gly-78, Gly-79, His-85, Gly-86, and Gly-87. A prP27-30 (protease resistant core) region spans residues 90 to 231 (GQGGGTHNQW…SQAYYDGRRS (142 aa)). An intrachain disulfide couples Cys-179 to Cys-214. Residues Asn-181 and Asn-197 are each glycosylated (N-linked (GlcNAc...) asparagine). Ser-231 carries the GPI-anchor amidated serine lipid modification. Positions 232-254 (SAVLFSSPPVILLISFLIFLIVG) are cleaved as a propeptide — removed in mature form.

Belongs to the prion family. Monomer and homodimer. Has a tendency to aggregate into amyloid fibrils containing a cross-beta spine, formed by a steric zipper of superposed beta-strands. Soluble oligomers may represent an intermediate stage on the path to fibril formation. Copper binding may promote oligomerization. Interacts with GRB2, APP, ERI3/PRNPIP and SYN1. Mislocalized cytosolically exposed PrP interacts with MGRN1; this interaction alters MGRN1 subcellular location and causes lysosomal enlargement. Interacts with KIAA1191.

The protein resides in the cell membrane. The protein localises to the golgi apparatus. In terms of biological role, its primary physiological function is unclear. Has cytoprotective activity against internal or environmental stresses. May play a role in neuronal development and synaptic plasticity. May be required for neuronal myelin sheath maintenance. May play a role in iron uptake and iron homeostasis. Soluble oligomers are toxic to cultured neuroblastoma cells and induce apoptosis (in vitro). Association with GPC1 (via its heparan sulfate chains) targets PRNP to lipid rafts. Also provides Cu(2+) or Zn(2+) for the ascorbate-mediated GPC1 deaminase degradation of its heparan sulfate side chains. In Nothocricetulus migratorius (Gray dwarf hamster), this protein is Major prion protein (PRNP).